The primary structure comprises 301 residues: GTP cyclohydrolase FolE2 (301 aa).

The protein belongs to the GTP cyclohydrolase IV family.

The enzyme catalyses GTP + H2O = 7,8-dihydroneopterin 3'-triphosphate + formate + H(+). It functions in the pathway cofactor biosynthesis; 7,8-dihydroneopterin triphosphate biosynthesis; 7,8-dihydroneopterin triphosphate from GTP: step 1/1. Functionally, converts GTP to 7,8-dihydroneopterin triphosphate. This is GTP cyclohydrolase FolE2 from Pseudomonas putida (strain GB-1).